The sequence spans 472 residues: MVIANSVKTSTPKFIISDISLSDFGRKEIKIAETEMPGLMALRDKYQSEKPLKGAKIAGSLHMTIQTAVLIETLVDLGAEVKWASCNIFSTQDHAAAAIADQGISVFAKKGETLDEYWQYTHYILDWGSDFPNMILDDGGDATGLLILGSKAEKDLSVLDNPSNEEEIALFNSIKSKLKNDGEFYSRIKSNIIGVTEETTTGVARLYQLQKQNALPFPAINVNDSVTKSKFDNLYGCRESLVDSIKRATDVMIAGKTALVMGFGDVGKGSAQSLRGLGAIVKVAEIDPICALQAAMEGYSVVRLEDVVEDIDIFVTATGNYQVITHENLVKMKDEAIVCNIGHFDNEIDVASLKNYQWENIKPQVDHITLPSGNKIILLAEGRLVNLGCATGHPSFVMSNSFTNQVLAQIELFNKSEQYAKEVYVLPKHLDEMVARLHLDKIGAKLTKLTKEQADYISVSVEGPYKSEFYRY.

Substrate contacts are provided by T64, D138, and E198. 199–201 serves as a coordination point for NAD(+); that stretch reads TTT. Substrate is bound by residues K228 and D232. Residues N233, 262-267, E285, N320, 341-343, and N386 each bind NAD(+); these read GFGDVG and IGH.

The protein belongs to the adenosylhomocysteinase family. NAD(+) is required as a cofactor.

Its subcellular location is the cytoplasm. The enzyme catalyses S-adenosyl-L-homocysteine + H2O = L-homocysteine + adenosine. It functions in the pathway amino-acid biosynthesis; L-homocysteine biosynthesis; L-homocysteine from S-adenosyl-L-homocysteine: step 1/1. May play a key role in the regulation of the intracellular concentration of adenosylhomocysteine. This Prochlorococcus marinus (strain MIT 9301) protein is Adenosylhomocysteinase.